Here is an 889-residue protein sequence, read N- to C-terminus: A disintegrin and metalloproteinase with thrombospondin motifs 8 (889 aa).

An N-terminal signal peptide occupies residues 1–26 (MLPAPAAPRWPPLLLLLLLLLPLARG). Residues 27–213 (APARPAAGGQ…PLGATSRTKR (187 aa)) constitute a propeptide that is removed on maturation. The disordered stretch occupies residues 138–210 (QGAGGSLAQP…PPPPLGATSR (73 aa)). A compositionally biased stretch (basic and acidic residues) spans 173–183 (EGQRQERGDHQ). Acidic residues predominate over residues 184 to 197 (EDSEEESQEEEAEG). In terms of domain architecture, Peptidase M12B spans 219–429 (RFVETLLVAD…GHGDCLLDAP (211 aa)). 11 disulfides stabilise this stretch: C294–C347, C323–C329, C341–C424, C379–C408, C452–C477, C463–C486, C472–C507, C501–C512, C538–C575, C542–C580, and C553–C565. N-linked (GlcNAc...) asparagine glycosylation occurs at N344. Zn(2+) is bound at residue H363. Residue E364 is part of the active site. The Zn(2+) site is built by H367 and H373. N400, N465, and N490 each carry an N-linked (GlcNAc...) asparagine glycan. Residues 438–525 (GLPGRMALYQ…EEVERPKPVA (88 aa)) form the Disintegrin domain. A TSP type-1 1 domain is found at 526–581 (DGGWAPWGPWGECSRTCGGGVQFSHRECKDPEPQNGGRYCLGRRAKYQSCHTEECP). N599 carries an N-linked (GlcNAc...) asparagine glycan. The interval 690–831 (RKVSGSLTPT…RATTNIIQPL (142 aa)) is spacer. The region spanning 833 to 888 (HAQWVLGDWSECSSTCGAGWQRRTVECRDPSGQASATCNKALKPEDAKPCESQLCP) is the TSP type-1 2 domain.

Requires Zn(2+) as cofactor. Post-translationally, the precursor is cleaved by a furin endopeptidase. Glycosylated. Can be O-fucosylated by POFUT2 on a serine or a threonine residue found within the consensus sequence C1-X(2)-(S/T)-C2-G of the TSP type-1 repeat domains where C1 and C2 are the first and second cysteine residue of the repeat, respectively. Fucosylated repeats can then be further glycosylated by the addition of a beta-1,3-glucose residue by the glucosyltransferase, B3GALTL. Fucosylation mediates the efficient secretion of ADAMTS family members. Can also be C-glycosylated with one or two mannose molecules on tryptophan residues within the consensus sequence W-X-X-W of the TPRs, and N-glycosylated. These other glycosylations can also facilitate secretion. As to expression, highly expressed in adult and fetal lung, lower expression in brain, placenta, heart, stomach and fetal brain and kidney.

The protein localises to the secreted. Its subcellular location is the extracellular space. The protein resides in the extracellular matrix. In terms of biological role, has anti-angiogenic properties. The chain is A disintegrin and metalloproteinase with thrombospondin motifs 8 (ADAMTS8) from Homo sapiens (Human).